We begin with the raw amino-acid sequence, 582 residues long: Histone deacetylase 9-B (582 aa).

The interaction with mef2 stretch occupies residues 146–195 (SNEVKQKLQEFLLSKSTKDITLNGIPQKITQSSKLWYTASHHTSLEQSSP). The segment covering 189–205 (SLEQSSPPLGGASSSCK) has biased composition (polar residues). 4 disordered regions span residues 189 to 254 (SLEQ…KEGN), 270 to 314 (TASS…QSRL), 409 to 447 (LSSG…RTQS), and 496 to 567 (VHLQ…NQSS). 2 stretches are compositionally biased toward basic and acidic residues: residues 213–224 (DYRDDFPLRKTV) and 238–253 (KVAE…RKEG). Residues 270-289 (TASSSAPGSGPSSPNGACSA) are compositionally biased toward low complexity. A compositionally biased stretch (polar residues) spans 295–314 (GPSSLPVTTRTERWPSQSRL).

The protein belongs to the histone deacetylase family. HD type 2 subfamily. As to quaternary structure, homodimer. Interacts with mef2.

Its subcellular location is the nucleus. It carries out the reaction N(6)-acetyl-L-lysyl-[histone] + H2O = L-lysyl-[histone] + acetate. Devoided of intrinsic deacetylase activity, promotes the deacetylation of lysine residues on the N-terminal part of the core histones (H2A, H2B, H3 and H4) by recruiting other histone deacetylases. Histone deacetylation gives a tag for epigenetic repression and plays an important role in transcriptional regulation, cell cycle progression and developmental events. Represses MEF2-dependent transcription. In Danio rerio (Zebrafish), this protein is Histone deacetylase 9-B (hdac9b).